Here is a 601-residue protein sequence, read N- to C-terminus: Elongation factor 4 (601 aa).

A tr-type G domain is found at 7–189 (SHIRNFSIIA…SIVQLVPPPQ (183 aa)). GTP-binding positions include 19-24 (DHGKST) and 136-139 (NKID).

It belongs to the TRAFAC class translation factor GTPase superfamily. Classic translation factor GTPase family. LepA subfamily.

The protein localises to the cell inner membrane. The catalysed reaction is GTP + H2O = GDP + phosphate + H(+). Required for accurate and efficient protein synthesis under certain stress conditions. May act as a fidelity factor of the translation reaction, by catalyzing a one-codon backward translocation of tRNAs on improperly translocated ribosomes. Back-translocation proceeds from a post-translocation (POST) complex to a pre-translocation (PRE) complex, thus giving elongation factor G a second chance to translocate the tRNAs correctly. Binds to ribosomes in a GTP-dependent manner. The sequence is that of Elongation factor 4 from Trichodesmium erythraeum (strain IMS101).